We begin with the raw amino-acid sequence, 361 residues long: Histidinol-phosphate aminotransferase (361 aa).

Lys-219 is subject to N6-(pyridoxal phosphate)lysine.

It belongs to the class-II pyridoxal-phosphate-dependent aminotransferase family. Histidinol-phosphate aminotransferase subfamily. In terms of assembly, homodimer. It depends on pyridoxal 5'-phosphate as a cofactor.

The enzyme catalyses L-histidinol phosphate + 2-oxoglutarate = 3-(imidazol-4-yl)-2-oxopropyl phosphate + L-glutamate. The protein operates within amino-acid biosynthesis; L-histidine biosynthesis; L-histidine from 5-phospho-alpha-D-ribose 1-diphosphate: step 7/9. This chain is Histidinol-phosphate aminotransferase, found in Cereibacter sphaeroides (strain ATCC 17029 / ATH 2.4.9) (Rhodobacter sphaeroides).